A 425-amino-acid polypeptide reads, in one-letter code: Formyl-CoA:oxalate CoA-transferase (425 aa).

Residues 17 to 18 (QS), arginine 38, 72 to 75 (LDTK), 96 to 98 (NFG), arginine 104, and 136 to 139 (KVYE) each bind CoA. Aspartate 168 (nucleophile) is an active-site residue. Residue 247 to 249 (GGQ) participates in substrate binding.

The protein belongs to the CoA-transferase III family. Frc subfamily. Homodimer.

The enzyme catalyses formyl-CoA + oxalate = oxalyl-CoA + formate. The protein operates within metabolic intermediate degradation; oxalate degradation; CO(2) and formate from oxalate: step 1/2. In terms of biological role, involved in the catabolism of oxalate and in the adapatation to low pH via the induction of the oxalate-dependent acid tolerance response (ATR). Catalyzes the transfer of the CoA moiety from formyl-CoA to oxalate. The sequence is that of Formyl-CoA:oxalate CoA-transferase from Bradyrhizobium sp. (strain ORS 278).